Reading from the N-terminus, the 361-residue chain is Putative agmatine deiminase (361 aa).

The Amidino-cysteine intermediate role is filled by Cys-354.

This sequence belongs to the agmatine deiminase family.

It carries out the reaction agmatine + H2O = N-carbamoylputrescine + NH4(+). The sequence is that of Putative agmatine deiminase from Streptococcus pneumoniae (strain Hungary19A-6).